Consider the following 295-residue polypeptide: Phosphoenolpyruvate phosphomutase (295 aa).

The Nucleophile role is filled by Asp58. Asp58 serves as a coordination point for Mg(2+).

This sequence belongs to the isocitrate lyase/PEP mutase superfamily. PEP mutase family. In terms of assembly, homotetramer. It depends on Mg(2+) as a cofactor.

The catalysed reaction is phosphoenolpyruvate + H(+) = 3-phosphonopyruvate. It functions in the pathway phosphorus metabolism; phosphonate biosynthesis. Functionally, formation of a carbon-phosphorus bond by converting phosphoenolpyruvate (PEP) to phosphonopyruvate (P-Pyr). The protein is Phosphoenolpyruvate phosphomutase of Mytilus edulis (Blue mussel).